Consider the following 173-residue polypeptide: Endoribonuclease YbeY (173 aa).

Zn(2+) is bound by residues histidine 126, histidine 130, and histidine 136.

Belongs to the endoribonuclease YbeY family. It depends on Zn(2+) as a cofactor.

Its subcellular location is the cytoplasm. Single strand-specific metallo-endoribonuclease involved in late-stage 70S ribosome quality control and in maturation of the 3' terminus of the 16S rRNA. This Sinorhizobium fredii (strain NBRC 101917 / NGR234) protein is Endoribonuclease YbeY.